Here is a 147-residue protein sequence, read N- to C-terminus: Hemoglobin subunit beta (147 aa).

A Globin domain is found at 3–147; that stretch reads EWTDDERAII…VVSALGRQYH (145 aa). Residues His-64 and His-93 each coordinate heme b.

The protein belongs to the globin family. Heterotetramer of two alpha chains and two beta chains. As to expression, red blood cells.

Functionally, involved in oxygen transport from gills to the various peripheral tissues. In Melanogrammus aeglefinus (Haddock), this protein is Hemoglobin subunit beta (hbb).